The chain runs to 144 residues: Single-stranded DNA-binding protein 3 (144 aa).

The 103-residue stretch at 1–103 folds into the SSB domain; it reads MNKVVLIGRL…IVAEEVQFLE (103 aa). Polar residues predominate over residues 112 to 134; sequence MANDQFNNGNENGSMQLPDNNDI. The segment at 112–144 is disordered; it reads MANDQFNNGNENGSMQLPDNNDITPIDDGDIPF.

As to quaternary structure, homotetramer.

This chain is Single-stranded DNA-binding protein 3 (ssb3), found in Clostridium acetobutylicum (strain ATCC 824 / DSM 792 / JCM 1419 / IAM 19013 / LMG 5710 / NBRC 13948 / NRRL B-527 / VKM B-1787 / 2291 / W).